The primary structure comprises 1209 residues: MMRLARFTQGFSFNKNVAKHRGSGSSNGTGNGSGTGNGQGLGGSCSANGLAATGGVGGGGGSGSGGGGCGSGSGSGSGKRKSKARTKCFGGTVFRCCLPCRGGGSAAPATSPPQTPAQTPDELKVIPEDCNLEKSAEQKRDLLERNNKEDDLLNRTVSGSELDLYGGAGGGTKKHSLADTIDTSVTTPISLKTLINDVDEELDQQLSAADIAAASLASGLVARRAEPETLSDASVSPTAVVQQQQQQQQQLQQPLLQSQPHFVPSSGNILSQVTLYSGSNPSTNPCQSAVQNQGQNSNPNPNQNPNTNPNQNQQRCSCQPQTSPLPHIKEEEESDQANFKHQTSLKEHQPLPPPITIATGYCGSCESVHHSSATSSSAGTVPPGGQQTQEYIAGTSSTPSPRIKLKFRKPHKSCWSRIVLAPIGSAGGSSSATTVIGSNSNETLASSSTTGGTATTTQNSSSVSVAAHHRLTSSSASALATSHPSNSQLLPTSKMQAEQGSIGDLQKYHSRYLKNRRHTLANVRFDVENGQGARSPLEGGSPSAGLVLQNLPQRRESFLYRSDSDFEMSPKSMSRNSSIASERFKEQEASILVDRSHGEDLIVTPFAQILASLRSVRNNLLSLTNVPASNKSRRPNQSSSASRSGNPPGAPLSQGEEAYTRLATDTIEELDWCLDQLETIQTHRSVSDMASLKFKRMLNKELSHFSESSRSGNQISEYICSTFLDKQQEFDLPSLRVEDNPELVAANAAAGQQSAGQYARSRSPRGPPMSQISGVKRPLSHTNSFTGERLPTFGVETPRENELGTLLGELDTWGIQIFSIGEFSVNRPLTCVAYTIFQSRELLTSLMIPPKTFLNFMSTLEDHYVKDNPFHNSLHAADVTQSTNVLLNTPALEGVFTPLEVGGALFAACIHDVDHPGLTNQFLVNSSSELALMYNDESVLENHHLAVAFKLLQNQGCDIFCNMQKKQRQTLRKMVIDIVLSTDMSKHMSLLADLKTMVETKKVAGSGVLLLDNYTDRIQVLENLVHCADLSNPTKPLPLYKRWVALLMEEFFLQGDKERESGMDISPMCDRHNATIEKSQVGFIDYIVHPLWETWADLVHPDAQDILDTLEENRDYYQSMIPPSPPPSGVDENPQEDRIRFQVTLEESDQENLAELEEGDESGGESTTTGTTGTTAASALSGAGGGGGGGGGMAPRTGGCQNQPQHGGM.

Disordered regions lie at residues 16-35 (NVAK…GSGT), 59-82 (GGGS…KRKS), 275-353 (LYSG…PLPP), 372-403 (SATS…SPRI), 442-498 (ETLA…MQAE), 626-655 (VPAS…LSQG), and 754-792 (SAGQ…RLPT). 2 stretches are compositionally biased toward gly residues: residues 25–35 (SSNGTGNGSGT) and 59–77 (GGGS…GSGS). The segment covering 275-290 (LYSGSNPSTNPCQSAV) has biased composition (polar residues). The segment covering 291 to 314 (QNQGQNSNPNPNQNPNTNPNQNQQ) has biased composition (low complexity). Residues 315-324 (RCSCQPQTSP) are compositionally biased toward polar residues. Positions 372–383 (SATSSSAGTVPP) are enriched in low complexity. A compositionally biased stretch (polar residues) spans 385–400 (GQQTQEYIAGTSSTPS). Composition is skewed to low complexity over residues 445 to 462 (ASSS…NSSS) and 472 to 483 (TSSSASALATSH). Polar residues-rich tracts occupy residues 484–498 (PSNS…MQAE) and 627–645 (PASN…SRSG). A PDEase domain is found at 795-1124 (VETPRENELG…DYYQSMIPPS (330 aa)). H871 functions as the Proton donor in the catalytic mechanism. Residue 871–875 (HNSLH) coordinates 3',5'-cyclic AMP. Residues H875, H911, D912, and D1029 each contribute to the a divalent metal cation site. 3',5'-cyclic AMP contacts are provided by D912, D1029, and Q1080. Positions 1146 to 1163 (EESDQENLAELEEGDESG) are enriched in acidic residues. Positions 1146-1209 (EESDQENLAE…CQNQPQHGGM (64 aa)) are disordered. Residues 1164–1181 (GESTTTGTTGTTAASALS) are compositionally biased toward low complexity. Positions 1182–1193 (GAGGGGGGGGGM) are enriched in gly residues. A compositionally biased stretch (polar residues) spans 1199-1209 (GCQNQPQHGGM).

The protein belongs to the cyclic nucleotide phosphodiesterase family. PDE4 subfamily. As to quaternary structure, monomer. Requires a divalent metal cation as cofactor.

It carries out the reaction 3',5'-cyclic AMP + H2O = AMP + H(+). The protein operates within purine metabolism; 3',5'-cyclic AMP degradation; AMP from 3',5'-cyclic AMP: step 1/1. In terms of biological role, hydrolyzes the second messenger cAMP, which is a key regulator of many important physiological processes. Vital for female fertility. Required for learning/memory. The protein is 3',5'-cyclic-AMP phosphodiesterase, isoform I of Drosophila melanogaster (Fruit fly).